A 246-amino-acid polypeptide reads, in one-letter code: 1-(5-phosphoribosyl)-5-[(5-phosphoribosylamino)methylideneamino] imidazole-4-carboxamide isomerase (246 aa).

The Proton acceptor role is filled by Asp-8. Residue Asp-131 is the Proton donor of the active site.

This sequence belongs to the HisA/HisF family.

It localises to the cytoplasm. It carries out the reaction 1-(5-phospho-beta-D-ribosyl)-5-[(5-phospho-beta-D-ribosylamino)methylideneamino]imidazole-4-carboxamide = 5-[(5-phospho-1-deoxy-D-ribulos-1-ylimino)methylamino]-1-(5-phospho-beta-D-ribosyl)imidazole-4-carboxamide. It functions in the pathway amino-acid biosynthesis; L-histidine biosynthesis; L-histidine from 5-phospho-alpha-D-ribose 1-diphosphate: step 4/9. The chain is 1-(5-phosphoribosyl)-5-[(5-phosphoribosylamino)methylideneamino] imidazole-4-carboxamide isomerase from Lactococcus lactis subsp. cremoris (strain MG1363).